Here is a 163-residue protein sequence, read N- to C-terminus: Large ribosomal subunit protein bL17 (163 aa).

Positions 127-163 are disordered; it reads KEVKKAKSRRGGKAKKAEGTAPEAPAAESESTTEASE. Residues 128 to 140 are compositionally biased toward basic residues; the sequence is EVKKAKSRRGGKA. A compositionally biased stretch (low complexity) spans 145–163; it reads GTAPEAPAAESESTTEASE.

The protein belongs to the bacterial ribosomal protein bL17 family. As to quaternary structure, part of the 50S ribosomal subunit. Contacts protein L32.

This is Large ribosomal subunit protein bL17 from Flavobacterium johnsoniae (strain ATCC 17061 / DSM 2064 / JCM 8514 / BCRC 14874 / CCUG 350202 / NBRC 14942 / NCIMB 11054 / UW101) (Cytophaga johnsonae).